Consider the following 162-residue polypeptide: Protein S40-4 (162 aa).

Belongs to the senescence regulator S40 family.

It localises to the cytoplasm. This is Protein S40-4 from Arabidopsis thaliana (Mouse-ear cress).